Reading from the N-terminus, the 539-residue chain is AT-rich interactive domain-containing protein 3A (539 aa).

The disordered stretch occupies residues 1 to 190; the sequence is MKLQAVMETL…PLSGHPQLQD (190 aa). The span at 55-73 shows a compositional bias: low complexity; that stretch reads LKIQRAQAAALAAMRAAAA. The segment covering 84–100 has biased composition (acidic residues); sequence SEEEDGESMASDEEDEK. A compositionally biased stretch (basic and acidic residues) spans 101–110; the sequence is ERDGESERYQ. Over residues 113 to 141 the composition is skewed to acidic residues; the sequence is ASEEEDLKGKWDEDDFEDEGEDEYEDMEE. The span at 161–173 shows a compositional bias: polar residues; sequence HSSQQAFPSQRSQ. The 93-residue stretch at 209–301 folds into the ARID domain; the sequence is DPKRKEFLDD…YLYPYECEKR (93 aa). One can recognise an REKLES domain in the interval 404–499; sequence AALEQLREKL…GVLFAQPPTS (96 aa). The interval 405–448 is important for nuclear localization; it reads ALEQLREKLESGEPPEKKMALGSEEQQRIIQRTIQHNLLAMTAQ. Positions 450–471 are homodimerization; it reads PMNIRINSQAEGRQDSAVNLTT. Residues 495–502 form an important for cytoplasmic localization region; the sequence is QPPTSASG. Over residues 497 to 512 the composition is skewed to polar residues; sequence PTSASGTSKGSSNRTG. The disordered stretch occupies residues 497–539; the sequence is PTSASGTSKGSSNRTGSIGGGSSNSQAAPPSTPSAPNSNNPSP. Over residues 519-539 the composition is skewed to low complexity; it reads SNSQAAPPSTPSAPNSNNPSP.

In terms of assembly, homodimer.

Its subcellular location is the nucleus. It localises to the cytoplasm. Functionally, transcription factor required for smad1 and smad2-mediated responses to TGFbeta during mesoderm induction. The chain is AT-rich interactive domain-containing protein 3A (arid3a) from Xenopus laevis (African clawed frog).